The chain runs to 1043 residues: P3N-PIPO polyprotein (1043 aa).

One can recognise a Peptidase S30 domain in the interval 219 to 362 (KMNDQGVDML…RTMSHKIVHF (144 aa)). Residues H270, D279, and S313 each act as for P1 proteinase activity in the active site. Residues 414-417 (KITC) carry the Involved in interaction with stylet and aphid transmission motif. Residues 672-674 (PTK) carry the Involved in virions binding and aphid transmission motif. Residues 698-820 (MYIAKEGYCY…ESSLKHYRVG (123 aa)) enclose the Peptidase C6 domain. Active-site for helper component proteinase activity residues include C706 and H779.

Belongs to the potyviridae P3N-PIPO polyprotein family. As to quaternary structure, interacts (via PIPO domain) with host PCaP1 protein; this interaction may help to anchor the movement complex to the plasma membrane from which the complex could move to the plasmodesmata. Potyviral RNA is expressed as two polyproteins which undergo post-translational proteolytic processing. Genome polyprotein is processed by NIa-pro, P1 and HC-pro proteinases resulting in the production of at least ten individual proteins. P3N-PIPO is cleaved by P1 and HC-pro proteinases resulting in the production of three individual proteins. The P1 proteinase and the HC-pro cleave only their respective C-termini autocatalytically.

It is found in the host cell junction. Its subcellular location is the host plasmodesma. The enzyme catalyses Hydrolyzes a Gly-|-Gly bond at its own C-terminus, commonly in the sequence -Tyr-Xaa-Val-Gly-|-Gly, in the processing of the potyviral polyprotein.. Its function is as follows. Cysteine protease that cleaves a Gly-Gly dipeptide at its own C-terminus. Required for aphid transmission and also has proteolytic activity. Interacts with virions and aphid stylets. Acts as a suppressor of RNA-mediated gene silencing, also known as post-transcriptional gene silencing (PTGS), a mechanism of plant viral defense that limits the accumulation of viral RNAs. May have RNA-binding activity. Allows efficient cell to cell propagation, by bypassing the host cell wall barrier. Transports viral genome to neighboring plant cells directly through plasmosdesmata, without any budding. This chain is P3N-PIPO polyprotein, found in Alliaria petiolata (Garlic mustard).